A 710-amino-acid polypeptide reads, in one-letter code: DNA ligase (710 aa).

A disordered region spans residues 1–26 (MPEDAIGQQVPPEQEAAGAEPTSAAR). NAD(+)-binding positions include 53-57 (DAEFD), 102-103 (SL), and Glu-132. Catalysis depends on Lys-134, which acts as the N6-AMP-lysine intermediate. Arg-155, Glu-196, Lys-312, and Lys-336 together coordinate NAD(+). Zn(2+) is bound by residues Cys-430, Cys-433, Cys-449, and Cys-455. The BRCT domain occupies 619–708 (EGPRPLEGMT…PDAAREVARV (90 aa)).

This sequence belongs to the NAD-dependent DNA ligase family. LigA subfamily. It depends on Mg(2+) as a cofactor. The cofactor is Mn(2+).

The catalysed reaction is NAD(+) + (deoxyribonucleotide)n-3'-hydroxyl + 5'-phospho-(deoxyribonucleotide)m = (deoxyribonucleotide)n+m + AMP + beta-nicotinamide D-nucleotide.. Its function is as follows. DNA ligase that catalyzes the formation of phosphodiester linkages between 5'-phosphoryl and 3'-hydroxyl groups in double-stranded DNA using NAD as a coenzyme and as the energy source for the reaction. It is essential for DNA replication and repair of damaged DNA. The polypeptide is DNA ligase (Salinispora arenicola (strain CNS-205)).